A 310-amino-acid polypeptide reads, in one-letter code: 1-aminocyclopropane-1-carboxylate oxidase 1 (310 aa).

Residues 113–133 (EELSKTMDEYVCQLHKFAERL) adopt a coiled-coil conformation. The region spanning 158–259 (PAFGTKVAKY…RLSIATFYNP (102 aa)) is the Fe2OG dioxygenase domain. Positions 182, 184, and 240 each coordinate Fe cation. Arg-250 is a 2-oxoglutarate binding site.

It belongs to the iron/ascorbate-dependent oxidoreductase family. It depends on Fe(2+) as a cofactor.

The catalysed reaction is 1-aminocyclopropane-1-carboxylate + L-ascorbate + O2 = ethene + L-dehydroascorbate + hydrogen cyanide + CO2 + 2 H2O. Its pathway is alkene biosynthesis; ethylene biosynthesis via S-adenosyl-L-methionine; ethylene from S-adenosyl-L-methionine: step 2/2. Enzyme involved in the ethylene biosynthesis. May promote stem elongation by maximizing the extensibility cells, possibly by activating ethylene biosynthesis, in response to very-long-chain fatty acids (VLCFAs C20:0 to C30:0). This chain is 1-aminocyclopropane-1-carboxylate oxidase 1 (ACO1), found in Arabidopsis thaliana (Mouse-ear cress).